The primary structure comprises 146 residues: 3-dehydroquinate dehydratase (146 aa).

Y23 (proton acceptor) is an active-site residue. Residues N74, H80, and D87 each contribute to the substrate site. The active-site Proton donor is H100. Substrate contacts are provided by residues 101–102 and R111; that span reads IS.

Belongs to the type-II 3-dehydroquinase family. In terms of assembly, homododecamer.

It catalyses the reaction 3-dehydroquinate = 3-dehydroshikimate + H2O. It participates in metabolic intermediate biosynthesis; chorismate biosynthesis; chorismate from D-erythrose 4-phosphate and phosphoenolpyruvate: step 3/7. Its function is as follows. Catalyzes a trans-dehydration via an enolate intermediate. The sequence is that of 3-dehydroquinate dehydratase from Bacillus cereus (strain B4264).